The primary structure comprises 533 residues: Phosphoenolpyruvate carboxykinase (ATP) (533 aa).

Substrate-binding residues include Arg-59, Tyr-199, and Lys-205. Residues Lys-205, His-224, and Gly-240–Thr-248 contribute to the ATP site. Mn(2+) contacts are provided by Lys-205 and His-224. A Mn(2+)-binding site is contributed by Asp-261. ATP-binding positions include Glu-289, Arg-325, Arg-441 to Ile-442, and Thr-447. Arg-325 contacts substrate.

The protein belongs to the phosphoenolpyruvate carboxykinase (ATP) family. In terms of assembly, monomer. Mn(2+) is required as a cofactor.

The protein localises to the cytoplasm. It carries out the reaction oxaloacetate + ATP = phosphoenolpyruvate + ADP + CO2. It functions in the pathway carbohydrate biosynthesis; gluconeogenesis. In terms of biological role, involved in the gluconeogenesis. Catalyzes the conversion of oxaloacetate (OAA) to phosphoenolpyruvate (PEP) through direct phosphoryl transfer between the nucleoside triphosphate and OAA. This is Phosphoenolpyruvate carboxykinase (ATP) from Idiomarina loihiensis (strain ATCC BAA-735 / DSM 15497 / L2-TR).